We begin with the raw amino-acid sequence, 1541 residues long: Multiple epidermal growth factor-like domains protein 6 (1541 aa).

Positions 1–30 (MSFLEEARAAGRAVVLALVLLLLPAVPVGA) are cleaved as a signal peptide. In terms of domain architecture, EMI spans 44-125 (MPHVCAEQEL…QQPDEEGCLS (82 aa)). Cystine bridges form between cysteine 48-cysteine 111, cysteine 77-cysteine 83, cysteine 110-cysteine 123, cysteine 128-cysteine 139, cysteine 133-cysteine 147, cysteine 149-cysteine 158, cysteine 165-cysteine 176, cysteine 172-cysteine 185, cysteine 187-cysteine 200, cysteine 242-cysteine 255, cysteine 248-cysteine 268, cysteine 270-cysteine 283, cysteine 289-cysteine 300, cysteine 296-cysteine 309, and cysteine 311-cysteine 324. The 36-residue stretch at 124 to 159 (LSAECSASLCFHGGRCVPGSAQPCHCPPGFQGPRCQ) folds into the EGF-like 1 domain. The EGF-like 2; calcium-binding domain maps to 161–201 (DVDECRTHNGGCQHRCVNTPGSYLCECKPGFRLHTDSRTCL). EGF-like domains lie at 206–242 (CALGNGGCQHHCVQLTITRHRCQCRPGFQLQEDGRHC) and 238–284 (DGRH…KACE). N-linked (GlcNAc...) asparagine glycosylation occurs at asparagine 252. Residues 285–325 (DVDECAAGLAQCAHGCLNTQGSFKCVCHAGYELGADGRQCY) enclose the EGF-like 5; calcium-binding domain. EGF-like domains are found at residues 335-370 (CEANNGGCSHGCSHTSAGPLCTCPRGYELDTDQRTC) and 375-411 (DCADSPCCQQVCTNNPGGYECGCYAGYRLSADGCGCE). Residues 412–452 (DVDECASSRGGCEHHCTNLAGSFQCSCEAGYRLHEDRRGCS) enclose the EGF-like 8; calcium-binding domain. Cystine bridges form between cysteine 416–cysteine 427, cysteine 423–cysteine 436, cysteine 438–cysteine 451, cysteine 520–cysteine 533, cysteine 527–cysteine 540, cysteine 542–cysteine 551, cysteine 564–cysteine 576, cysteine 570–cysteine 583, cysteine 585–cysteine 594, cysteine 607–cysteine 619, cysteine 613–cysteine 626, and cysteine 628–cysteine 637. EGF-like domains follow at residues 516–552 (FGHDCSLTCDDCRNGGTCLLGLDGCDCPEGWTGLICN), 560–595 (FGKNCSFSCSCQNGGTCDSVTGACRCPPGVSGTNCE), 603–638 (YGKHCRKKCNCANRGRCHRLYGACLCDPGLYGRFCH), 736–770 (FGVNCSSSCSCGGAPCHGVTGQCRCPPGRTGEDCE), 783–814 (QEICPACQHAARCDPETGACLCLPGFVGSRCQ), 822–857 (YGPSCQTRCSCANDGHCHPATGHCSCAPGWTGFSCQ), 865–901 (WGPDCSHPCNCSAGHGSCDAISGLCLCEAGYVGPRCE), 909–944 (FGPGCEQRCQCQHGAACDHVSGACTCPAGWRGTFCE), 955–987 (DCRSACNCTAGAACDAVNGSCLCPAGRRGPRCA), 995–1030 (YGHNCSQACACFNGASCDPVHGQCHCAPGWMGPSCL), 1038–1073 (YGDNCRHSCLCQNGGTCDPVSGHCACPEGWAGLACE), 1081–1116 (VRAGCRHSGGCLNGGLCDPHTGRCLCPAGWTGDKCQ), 1124–1159 (FGEACAQRCSCPPGAACHHVTGACRCPPGFTGSGCE), 1211–1246 (YGPGCEQLCGCLNGGSCDAATGACRCPTGFLGTDCN), 1254–1289 (FGPNCTHVCGCGQGAACDPVTGTCLCPPGRAGVRCE), 1297–1332 (FGVGCEHTCSCRNGGLCHASNGSCSCGLGWTGRHCE), 1345–1375 (HLECSCHNNSTCEPATGTCRCGPGFYGQACE), 1383–1418 (HGAGCQGLCWCQHGAPCDPISGRCLCPAGFHGHFCE), and 1469–1504 (FGPSCTLHCDCGGGADCDPVSGQCHCVDGYMGPTCR). N-linked (GlcNAc...) asparagine glycosylation is present at asparagine 739. Disulfide bonds link cysteine 740–cysteine 751, cysteine 744–cysteine 758, cysteine 760–cysteine 769, cysteine 786–cysteine 795, cysteine 789–cysteine 802, cysteine 804–cysteine 813, cysteine 826–cysteine 838, cysteine 832–cysteine 845, cysteine 847–cysteine 856, cysteine 869–cysteine 882, cysteine 873–cysteine 889, cysteine 891–cysteine 900, cysteine 913–cysteine 925, cysteine 919–cysteine 932, and cysteine 934–cysteine 943. Intrachain disulfides connect cysteine 999–cysteine 1011, cysteine 1005–cysteine 1018, cysteine 1020–cysteine 1029, cysteine 1042–cysteine 1054, cysteine 1048–cysteine 1061, cysteine 1063–cysteine 1072, cysteine 1085–cysteine 1097, cysteine 1091–cysteine 1104, cysteine 1106–cysteine 1115, cysteine 1128–cysteine 1140, cysteine 1134–cysteine 1147, cysteine 1149–cysteine 1158, cysteine 1215–cysteine 1227, cysteine 1221–cysteine 1234, cysteine 1236–cysteine 1245, cysteine 1258–cysteine 1270, cysteine 1264–cysteine 1277, cysteine 1279–cysteine 1288, cysteine 1301–cysteine 1313, cysteine 1307–cysteine 1320, cysteine 1322–cysteine 1331, cysteine 1348–cysteine 1356, cysteine 1350–cysteine 1363, cysteine 1365–cysteine 1374, cysteine 1387–cysteine 1399, cysteine 1393–cysteine 1406, cysteine 1408–cysteine 1417, cysteine 1473–cysteine 1485, cysteine 1479–cysteine 1492, and cysteine 1494–cysteine 1503. A disordered region spans residues 1509–1541 (LRLPENPSLAQGSAGTLPASSRPTSRSGGPARH). Polar residues predominate over residues 1516–1535 (SLAQGSAGTLPASSRPTSRS).

The protein resides in the secreted. The polypeptide is Multiple epidermal growth factor-like domains protein 6 (MEGF6) (Homo sapiens (Human)).